The chain runs to 331 residues: Pantothenate kinase (331 aa).

109–116 is a binding site for ATP; the sequence is GSVAVGKS.

The protein belongs to the prokaryotic pantothenate kinase family.

It localises to the cytoplasm. The catalysed reaction is (R)-pantothenate + ATP = (R)-4'-phosphopantothenate + ADP + H(+). It functions in the pathway cofactor biosynthesis; coenzyme A biosynthesis; CoA from (R)-pantothenate: step 1/5. The polypeptide is Pantothenate kinase (Rhizobium etli (strain CIAT 652)).